Reading from the N-terminus, the 326-residue chain is Adenosine receptor A1 (326 aa).

Residues 1–10 (MPPAISAFQA) lie on the Extracellular side of the membrane. The helical transmembrane segment at 11–33 (AYIGIEVLIALVSVPGNVLVIWA) threads the bilayer. Residues 34-46 (VKVNQALRDATFC) are Cytoplasmic-facing. A helical transmembrane segment spans residues 47–69 (FIVSLAVADVAVGALVIPLAILI). Residues 70-80 (NIGPRTYFHTC) are Extracellular-facing. The cysteines at positions 80 and 169 are disulfide-linked. A helical transmembrane segment spans residues 81 to 102 (LMVACPVLILTQSSILALLAIA). Residues 103 to 123 (VDRYLRVKIPLRYKTVVTPRR) lie on the Cytoplasmic side of the membrane. A helical transmembrane segment spans residues 124-146 (AAVAIAGCWILSFVVGLTPLFGW). The Extracellular segment spans residues 147–176 (NRLGEAQRAWAANGSGGEPVIKCEFEKVIS). Asn159 is a glycosylation site (N-linked (GlcNAc...) asparagine). Residues 177–201 (MEYMVYFNFFVWVLPPLLLMVLIYL) form a helical membrane-spanning segment. Residues 202-235 (EVFYLIRRQLGKKVSASSGDPQKYYGKELKIAKS) are Cytoplasmic-facing. A helical transmembrane segment spans residues 236-259 (LALILFLFALSWLPLHILNCITLF). At 260 to 267 (CPSCRKPS) the chain is on the extracellular side. Residues 268–292 (ILMYIAIFLTHGNSAMNPIVYAFRI) form a helical membrane-spanning segment. Topologically, residues 293 to 326 (QKFRVTFLKIWNDHFRCQPTPPVDEDPPEEAPHD) are cytoplasmic. Cys309 is lipidated: S-palmitoyl cysteine.

The protein belongs to the G-protein coupled receptor 1 family.

The protein resides in the cell membrane. Functionally, receptor for adenosine. The activity of this receptor is mediated by G proteins which inhibit adenylyl cyclase. The polypeptide is Adenosine receptor A1 (ADORA1) (Canis lupus familiaris (Dog)).